The chain runs to 636 residues: Ligand-gated ion channel 4 (636 aa).

An N-terminal signal peptide occupies residues 1-25; that stretch reads MVICHSCTTFCILLVIDLVPCRIVG. Residues 26–326 are Extracellular-facing; sequence MENVENRVMF…IHMHRRPLFY (301 aa). Residues N45, N141, N179, and N227 are each glycosylated (N-linked (GlcNAc...) asparagine). The cysteines at positions 240 and 254 are disulfide-linked. A glycan (N-linked (GlcNAc...) asparagine) is linked at N284. 3 helical membrane-spanning segments follow: residues 327–347, 357–377, and 383–403; these read VFNH…GFLM, MIIT…ESIP, and VPLI…ATCV. The Cytoplasmic segment spans residues 404–602; the sequence is NVITLNMHRN…QLASVVDRLL (199 aa). Residues 603–623 traverse the membrane as a helical segment; sequence LCLFCTATLFTIICLLIVPVV.

This sequence belongs to the ligand-gated ion channel (TC 1.A.9) family.

It is found in the postsynaptic cell membrane. It localises to the cell membrane. Acetylcholine receptor. The polypeptide is Ligand-gated ion channel 4 (Caenorhabditis briggsae).